An 858-amino-acid polypeptide reads, in one-letter code: Bifunctional uridylyltransferase/uridylyl-removing enzyme (858 aa).

The uridylyltransferase stretch occupies residues 1-324 (MSAHAAPSPE…PATSGITRVL (324 aa)). The segment at 325–681 (SPDRFVEKQG…ARPSPIGDAL (357 aa)) is uridylyl-removing. An HD domain is found at 443-565 (VDQHILMVLR…VGNERYLTAL (123 aa)). 2 ACT domains span residues 682–761 (QVLV…PEPS) and 790–858 (ILSV…AIAV).

The protein belongs to the GlnD family. Requires Mg(2+) as cofactor.

The enzyme catalyses [protein-PII]-L-tyrosine + UTP = [protein-PII]-uridylyl-L-tyrosine + diphosphate. The catalysed reaction is [protein-PII]-uridylyl-L-tyrosine + H2O = [protein-PII]-L-tyrosine + UMP + H(+). With respect to regulation, uridylyltransferase (UTase) activity is inhibited by glutamine, while glutamine activates uridylyl-removing (UR) activity. Functionally, modifies, by uridylylation and deuridylylation, the PII regulatory proteins (GlnB and homologs), in response to the nitrogen status of the cell that GlnD senses through the glutamine level. Under low glutamine levels, catalyzes the conversion of the PII proteins and UTP to PII-UMP and PPi, while under higher glutamine levels, GlnD hydrolyzes PII-UMP to PII and UMP (deuridylylation). Thus, controls uridylylation state and activity of the PII proteins, and plays an important role in the regulation of nitrogen fixation and metabolism. In Burkholderia lata (strain ATCC 17760 / DSM 23089 / LMG 22485 / NCIMB 9086 / R18194 / 383), this protein is Bifunctional uridylyltransferase/uridylyl-removing enzyme.